The sequence spans 305 residues: Axin interactor, dorsalization-associated protein A (305 aa).

An axin-binding region spans residues 153–220 (GTLLPRLPSE…RKEDTYVHFN (68 aa)). Residues 156–303 (LPRLPSEPGM…LYLHLLQTLL (148 aa)) form the C2 Aida-type domain.

This sequence belongs to the AIDA family.

In terms of biological role, acts as a ventralizing factor during embryogenesis. Inhibits axin-mediated JNK activation by binding axin and disrupting axin homodimerization. This in turn antagonizes a Wnt/beta-catenin-independent dorsalization pathway activated by axin/JNK-signaling. In Xenopus laevis (African clawed frog), this protein is Axin interactor, dorsalization-associated protein A (aida-a).